Consider the following 180-residue polypeptide: MTERLKVVFQEKIAPKLIEKNRYKNKHQVPVIEKIVINRGLGNASQNTKILESSLNELTLIAGQRGVLTRSKKAIAAFKLREKTPVGVAVTLRGDRMYAFLDRLINLALPRIRDFQGINPKSFDGLGNYSLGLEEQLMFPEIDYDKIDQIRGMDISIITTAKKDSEGFQILKEFGMPFKE.

This sequence belongs to the universal ribosomal protein uL5 family. In terms of assembly, part of the 50S ribosomal subunit; contacts the 5S rRNA.

It localises to the plastid. It is found in the chloroplast. Functionally, binds 5S rRNA, forms part of the central protuberance of the 50S subunit. The polypeptide is Large ribosomal subunit protein uL5c (rpl5) (Tupiella akineta (Green alga)).